The chain runs to 322 residues: Packaging protein 3 (322 aa).

Positions Met1–Leu24 are disordered. Residues Met1–Thr127 form an interaction with packaging protein 1 region.

This sequence belongs to the adenoviridae packaging protein 3 family. As to quaternary structure, part of the genome packaging complex composed of packaging proteins 1, 2 and 3; this complex specifically binds to the packaging sequence on the left end of viral genomic DNA and performs packaging of the viral genome. Interacts with hexon-linking protein IIIa; this interaction is required to promote correct genome packaging. In terms of processing, cleaved at different sites by the viral protease during virion maturation.

The protein resides in the host nucleus. Its function is as follows. Involved in viral genome packaging through its interaction with packaging proteins 1 and 2. After proteolytic cleavage by adenovirus protease, L1 52/55k protein is removed from the capsid during viral maturation. The chain is Packaging protein 3 from Pantherophis guttatus (Corn snake).